The following is a 352-amino-acid chain: D-alanine--D-alanine ligase A (352 aa).

The ATP-grasp domain occupies 138-341 (KRMVQSAGLV…PPKLVGALVE (204 aa)). 165 to 220 (ECLGSSTLFVKPATSGSSIGVSRVSNALEYAAAFAIAAREDTKVLVEAAVCGREIE) provides a ligand contact to ATP. The Mg(2+) site is built by aspartate 295, glutamate 308, and asparagine 310.

It belongs to the D-alanine--D-alanine ligase family. The cofactor is Mg(2+). Mn(2+) is required as a cofactor.

Its subcellular location is the cytoplasm. The catalysed reaction is 2 D-alanine + ATP = D-alanyl-D-alanine + ADP + phosphate + H(+). It participates in cell wall biogenesis; peptidoglycan biosynthesis. Functionally, cell wall formation. The sequence is that of D-alanine--D-alanine ligase A from Pseudomonas putida (strain ATCC 47054 / DSM 6125 / CFBP 8728 / NCIMB 11950 / KT2440).